The following is a 90-amino-acid chain: Probable Fe(2+)-trafficking protein (90 aa).

The protein belongs to the Fe(2+)-trafficking protein family.

Its function is as follows. Could be a mediator in iron transactions between iron acquisition and iron-requiring processes, such as synthesis and/or repair of Fe-S clusters in biosynthetic enzymes. This chain is Probable Fe(2+)-trafficking protein, found in Cupriavidus taiwanensis (strain DSM 17343 / BCRC 17206 / CCUG 44338 / CIP 107171 / LMG 19424 / R1) (Ralstonia taiwanensis (strain LMG 19424)).